The primary structure comprises 314 residues: BRCA2 and CDKN1A-interacting protein (314 aa).

The tract at residues 1–56 is disordered; the sequence is MASRSKRRAVESGVPQPPDPPVQRDEEEEKEVENEDEDDDDSDKEKDEEDEVIDEE. Acidic residues predominate over residues 25 to 56; sequence DEEEEKEVENEDEDDDDSDKEKDEEDEVIDEE. Residues S42 and S112 each carry the phosphoserine modification. The tract at residues 59–167 is interaction with BRCA2; sequence IEFEAYSLSD…EKSMVEQLDK (109 aa). An interaction with CDKN1A region spans residues 161-259; the sequence is MVEQLDKFLN…NAEEEFFYEK (99 aa). S281 carries the post-translational modification Phosphoserine.

Belongs to the BCP1 family. Interacts with BRCA2, CDKN1A and MTDH/LYRIC. Isoform 2/alpha, but not isoform 1/beta, interacts with DCTN1/p150-glued and ACTR1A/ARP1. Both isoform 1 and isoform 2 interact with alpha-, beta- and gamma-tubulins. Interacts with TENT5C; the interaction has no effect on TENT5C poly(A) polymerase function. Expressed at high levels in testis and skeletal muscle and at lower levels in brain, heart, kidney, liver, lung, ovary, pancreas, placenta, and spleen.

It localises to the nucleus. Its subcellular location is the cytoplasm. It is found in the cytoskeleton. The protein localises to the microtubule organizing center. The protein resides in the centrosome. It localises to the centriole. Its subcellular location is the spindle pole. In terms of biological role, during interphase, required for microtubule organizing and anchoring activities. During mitosis, required for the organization and stabilization of the spindle pole. Isoform 2/alpha is particularly important for the regulation of microtubule anchoring, microtubule stability, spindle architecture and spindle orientation, compared to isoform 1/beta. May promote cell cycle arrest by enhancing the inhibition of CDK2 activity by CDKN1A. May be required for repair of DNA damage by homologous recombination in conjunction with BRCA2. May not be involved in non-homologous end joining (NHEJ). In Homo sapiens (Human), this protein is BRCA2 and CDKN1A-interacting protein (BCCIP).